The chain runs to 97 residues: Large ribosomal subunit protein bL28 (97 aa).

Belongs to the bacterial ribosomal protein bL28 family.

The chain is Large ribosomal subunit protein bL28 from Rickettsia canadensis (strain McKiel).